Consider the following 274-residue polypeptide: Ribosomal RNA small subunit methyltransferase A (274 aa).

Asn27, Leu29, Gly54, Glu75, Asp100, and Asn121 together coordinate S-adenosyl-L-methionine.

The protein belongs to the class I-like SAM-binding methyltransferase superfamily. rRNA adenine N(6)-methyltransferase family. RsmA subfamily.

It is found in the cytoplasm. It carries out the reaction adenosine(1518)/adenosine(1519) in 16S rRNA + 4 S-adenosyl-L-methionine = N(6)-dimethyladenosine(1518)/N(6)-dimethyladenosine(1519) in 16S rRNA + 4 S-adenosyl-L-homocysteine + 4 H(+). Functionally, specifically dimethylates two adjacent adenosines (A1518 and A1519) in the loop of a conserved hairpin near the 3'-end of 16S rRNA in the 30S particle. May play a critical role in biogenesis of 30S subunits. This Acinetobacter baylyi (strain ATCC 33305 / BD413 / ADP1) protein is Ribosomal RNA small subunit methyltransferase A.